The chain runs to 852 residues: Bifunctional uridylyltransferase/uridylyl-removing enzyme (852 aa).

The segment at 1–318 (MPENLSSALE…STPVRVTLRI (318 aa)) is uridylyltransferase. Residues 319 to 672 (DDDYIQVNNQ…SRILPQSDSF (354 aa)) are uridylyl-removing. One can recognise an HD domain in the interval 436–558 (VDDHILAVVR…VQTHERLSAL (123 aa)). ACT domains are found at residues 673–757 (QVMV…SCNR) and 785–852 (SVEI…EQLA).

This sequence belongs to the GlnD family. Requires Mg(2+) as cofactor.

The enzyme catalyses [protein-PII]-L-tyrosine + UTP = [protein-PII]-uridylyl-L-tyrosine + diphosphate. It carries out the reaction [protein-PII]-uridylyl-L-tyrosine + H2O = [protein-PII]-L-tyrosine + UMP + H(+). Its activity is regulated as follows. Uridylyltransferase (UTase) activity is inhibited by glutamine, while glutamine activates uridylyl-removing (UR) activity. In terms of biological role, modifies, by uridylylation and deuridylylation, the PII regulatory proteins (GlnB and homologs), in response to the nitrogen status of the cell that GlnD senses through the glutamine level. Under low glutamine levels, catalyzes the conversion of the PII proteins and UTP to PII-UMP and PPi, while under higher glutamine levels, GlnD hydrolyzes PII-UMP to PII and UMP (deuridylylation). Thus, controls uridylylation state and activity of the PII proteins, and plays an important role in the regulation of nitrogen assimilation and metabolism. The chain is Bifunctional uridylyltransferase/uridylyl-removing enzyme from Neisseria gonorrhoeae (strain ATCC 700825 / FA 1090).